The following is a 389-amino-acid chain: RHOMBOID-like protein 1 (389 aa).

7 helical membrane passes run 56-76 (PWLVPAIVVANIALFAISMFI), 136-156 (IWLHAGVFHVLANMLSLIFIG), 163-183 (FGFVRIGLLYMISGFGGSLLS), 191-211 (ISVGASGALFGLLGAMLSELL), 221-241 (FAALLTLIFIIAINLAVGILP), 244-264 (DNFAHLGGFTSGFLLGFVFLI), and 295-315 (VLWITSLVLLIAGYTAGLVVL). Ser-196 acts as the Nucleophile in catalysis. His-248 functions as the Charge relay system in the catalytic mechanism.

This sequence belongs to the peptidase S54 family. Expressed in roots, seedlings, leaves, stems and flowers.

The protein localises to the golgi apparatus membrane. The catalysed reaction is Cleaves type-1 transmembrane domains using a catalytic dyad composed of serine and histidine that are contributed by different transmembrane domains.. Functionally, probable rhomboid-type serine protease that catalyzes intramembrane proteolysis. Unable to cleave the Drosophila protein Spitz. This is RHOMBOID-like protein 1 from Arabidopsis thaliana (Mouse-ear cress).